The chain runs to 431 residues: Ribosomal RNA small subunit methyltransferase B (431 aa).

S-adenosyl-L-methionine contacts are provided by residues 254 to 260 (CAAPGGK), Asp-277, Asp-303, and Asp-322. Cys-375 functions as the Nucleophile in the catalytic mechanism.

It belongs to the class I-like SAM-binding methyltransferase superfamily. RsmB/NOP family.

It localises to the cytoplasm. The enzyme catalyses cytidine(967) in 16S rRNA + S-adenosyl-L-methionine = 5-methylcytidine(967) in 16S rRNA + S-adenosyl-L-homocysteine + H(+). Specifically methylates the cytosine at position 967 (m5C967) of 16S rRNA. This is Ribosomal RNA small subunit methyltransferase B from Klebsiella pneumoniae subsp. pneumoniae (strain ATCC 700721 / MGH 78578).